The following is a 34-amino-acid chain: METNDLGFVASLMFILVPAIFLIVLYIGTNRSEA.

A helical membrane pass occupies residues Gly-7–Ile-27.

The protein belongs to the PsbM family. As to quaternary structure, PSII is composed of 1 copy each of membrane proteins PsbA, PsbB, PsbC, PsbD, PsbE, PsbF, PsbH, PsbI, PsbJ, PsbK, PsbL, PsbM, PsbT, PsbX, PsbY, PsbZ, Psb30/Ycf12, peripheral proteins PsbO, CyanoQ (PsbQ), PsbU, PsbV and a large number of cofactors. It forms dimeric complexes.

It localises to the cellular thylakoid membrane. In terms of biological role, one of the components of the core complex of photosystem II (PSII). PSII is a light-driven water:plastoquinone oxidoreductase that uses light energy to abstract electrons from H(2)O, generating O(2) and a proton gradient subsequently used for ATP formation. It consists of a core antenna complex that captures photons, and an electron transfer chain that converts photonic excitation into a charge separation. This subunit is found at the monomer-monomer interface. This chain is Photosystem II reaction center protein M, found in Synechococcus sp. (strain CC9902).